The chain runs to 443 residues: Differentially expressed in FDCP 8 homolog B (443 aa).

The segment at 14–49 (HLNPFDKKGGAERHPADSETQPCKDSSTSSPLSVPE) is disordered. Residues 17–30 (PFDKKGGAERHPAD) are compositionally biased toward basic and acidic residues. The segment covering 31 to 45 (SETQPCKDSSTSSPL) has biased composition (polar residues). 2 Phorbol-ester/DAG-type zinc fingers span residues 134–185 (EHRF…TKPC) and 364–424 (IHTT…STSC).

The protein belongs to the DEF8 family.

Its function is as follows. Positively regulates lysosome peripheral distribution and ruffled border formation in osteoclasts. Involved in bone resorption. The chain is Differentially expressed in FDCP 8 homolog B (def8-b) from Xenopus laevis (African clawed frog).